Consider the following 599-residue polypeptide: MPRVAKPKAAAPAKKVVSAKKAKSKLYKMPEKVKEGTVFTDLAKGQWRIGPSIGVGGFGEIYAACKVGEKNYDAVVKCEPHGNGPLFVEMHFYLRNAKLEDIKQFMQKHGLKSLGMPYILANGSVEVNGEKHRFIVMPRYGSDLTKFLEQNGKRLPEGTVYRLAIQMLDVYQYMHSNGYVHADLKAANILLGLEKGGAAQAYLVDFGLASHFVTGDFKPDPKKMHNGTIEYTSRDAHLGVPTRRADLEILGYNLIEWLGAELPWVTQKLLAVPPKVQKAKEAFMDNIGESLKTLFPKGVPPPIGDFMKYVSKLTHNQEPDYDKCRSWFSSALKQLKIPNNGDLDFKMKPQTSSNNNLSPPGTSKAATARKAKKIDSPVLNSSLDEKISASEDDEEEEEKSHRKKTAKKVTPSARNAKVSPLKRVADSSPPSQKRVKTEPKSTPRERATPKASPKPRSTPKASPKPQTPTAARLRTPNAKINFSPSISLRGRPGGKTVINDDLTPQPRSKKTYEFNFELDVSMDANVIVNVKRKKKADQDKATAVDSRTPSSRSALASSSKEEASPVTRVNLRKVNGHGDSSTPGRSPRTPAVTVRKYQG.

In terms of domain architecture, Protein kinase spans Trp-47–Phe-328. ATP is bound by residues Ile-53 to Ile-61 and Lys-77. Asp-183 (proton acceptor) is an active-site residue. Disordered stretches follow at residues Asn-340–Arg-507 and Arg-532–Gly-599. Residues Pro-349 to Gly-361 show a composition bias toward polar residues. 5 positions are modified to phosphoserine: Ser-376, Ser-381, Ser-382, Ser-388, and Ser-390. Basic and acidic residues predominate over residues Val-435–Thr-448. Ser-483 is subject to Phosphoserine. Residues Ser-546–Ser-558 are compositionally biased toward low complexity. 2 positions are modified to phosphoserine: Ser-564 and Ser-586. At Thr-589 the chain carries Phosphothreonine.

It belongs to the protein kinase superfamily. CK1 Ser/Thr protein kinase family. VRK subfamily. As to quaternary structure, may interact with Unc-89 (via protein kinase domain 1). Interacts with L(2)gl. It depends on Mg(2+) as a cofactor. Post-translationally, phosphorylated during mitosis and female meiosis. As to expression, expressed in ovaries (at protein level). Expressed in indirect flight muscle (IFM) (at protein level).

It localises to the cytoplasm. Its subcellular location is the nucleus. It is found in the chromosome. The protein localises to the myofibril. The protein resides in the sarcomere. It localises to the z line. Its subcellular location is the m line. The catalysed reaction is L-seryl-[protein] + ATP = O-phospho-L-seryl-[protein] + ADP + H(+). The enzyme catalyses L-threonyl-[protein] + ATP = O-phospho-L-threonyl-[protein] + ADP + H(+). Serine/threonine-protein kinase involved in somatic mitosis and female meiosis. Required for spindle organization in mitosis, and for the establishment or maintenance of meiosis-specific chromosomal configurations, including the prophase I karyosome and the metaphase I spindle. Specifically phosphorylates nucleosomal H2A on 'Thr-119'. Required for the development and organization of indirect flight muscle sarcomeres by regulating the formation of M line and H zone and the correct assembly of thick and thin filaments in the sarcomere. The chain is Nucleosomal histone kinase 1 (ball) from Drosophila melanogaster (Fruit fly).